The chain runs to 356 residues: Guanine nucleotide-binding protein alpha-3 subunit (356 aa).

Residues 1–26 (MGACMSKNDEETEQKKRSQKIDRDLE) form a disordered region. The N-myristoyl glycine moiety is linked to residue G2. The S-palmitoyl cysteine moiety is linked to residue C4. A compositionally biased stretch (basic and acidic residues) spans 7–23 (KNDEETEQKKRSQKIDR). In terms of domain architecture, G-alpha spans 34–356 (KECKILLLGS…NNALKDSGIL (323 aa)). The tract at residues 37–50 (KILLLGSGESGKST) is G1 motif. GTP-binding positions include 42–49 (GSGESGKS), 179–185 (LRARTKT), 204–208 (DVGGQ), 273–276 (NKVD), and A328. 2 residues coordinate Mg(2+): S49 and T185. The interval 177–185 (DVLRARTKT) is G2 motif. The tract at residues 200–209 (IHMFDVGGQR) is G3 motif. A G4 motif region spans residues 269 to 276 (ILFLNKVD). Residues 326-331 (TQATDT) are G5 motif.

Belongs to the G-alpha family. G(q) subfamily. As to quaternary structure, g proteins are composed of 3 units; alpha, beta and gamma. The alpha chain contains the guanine nucleotide binding site.

Guanine nucleotide-binding proteins (G proteins) are involved as modulators or transducers in various transmembrane signaling systems. Involved in conidiation. The sequence is that of Guanine nucleotide-binding protein alpha-3 subunit (gna-3) from Neurospora crassa (strain ATCC 24698 / 74-OR23-1A / CBS 708.71 / DSM 1257 / FGSC 987).